Here is a 104-residue protein sequence, read N- to C-terminus: MAPAATAAAPRLLRAALLLLLLVAAGRRAAGAPVVNELRCQCLQTLQGIHLKNIQSVKVTTPGPHCDQTEVIASLKTGQEVCLNPTAPVVKKIIDKMLNKASAN.

The first 31 residues, 1 to 31 (MAPAATAAAPRLLRAALLLLLLVAAGRRAAG), serve as a signal peptide directing secretion. 2 disulfide bridges follow: C40–C66 and C42–C82.

The protein belongs to the intercrine alpha (chemokine CxC) family.

Its subcellular location is the secreted. Plays a role in monocyte adhesion to the endothelium. The chain is Growth-regulated protein homolog from Oryctolagus cuniculus (Rabbit).